We begin with the raw amino-acid sequence, 133 residues long: MLPAQHKLNSSMQFRTVMRKGRRAGSKTVVVHLWDSAESLDGTEKQGEVASFGGPRFGLVVSKAVGNAVVRHRTSRRLRHICASIAEKSPELLSPTHHVVIRALAGAGNATSAELERDIRYGLGKASRVRTNK.

Belongs to the RnpA family. In terms of assembly, consists of a catalytic RNA component (M1 or rnpB) and a protein subunit.

The catalysed reaction is Endonucleolytic cleavage of RNA, removing 5'-extranucleotides from tRNA precursor.. Functionally, RNaseP catalyzes the removal of the 5'-leader sequence from pre-tRNA to produce the mature 5'-terminus. It can also cleave other RNA substrates such as 4.5S RNA. The protein component plays an auxiliary but essential role in vivo by binding to the 5'-leader sequence and broadening the substrate specificity of the ribozyme. The chain is Ribonuclease P protein component from Corynebacterium glutamicum (strain ATCC 13032 / DSM 20300 / JCM 1318 / BCRC 11384 / CCUG 27702 / LMG 3730 / NBRC 12168 / NCIMB 10025 / NRRL B-2784 / 534).